The primary structure comprises 200 residues: NADH-quinone oxidoreductase subunit B 2 (200 aa).

Residues C79, C80, C144, and C174 each contribute to the [4Fe-4S] cluster site.

It belongs to the complex I 20 kDa subunit family. In terms of assembly, NDH-1 is composed of 14 different subunits. Subunits NuoB, C, D, E, F, and G constitute the peripheral sector of the complex. It depends on [4Fe-4S] cluster as a cofactor.

It localises to the cell inner membrane. The enzyme catalyses a quinone + NADH + 5 H(+)(in) = a quinol + NAD(+) + 4 H(+)(out). In terms of biological role, NDH-1 shuttles electrons from NADH, via FMN and iron-sulfur (Fe-S) centers, to quinones in the respiratory chain. The immediate electron acceptor for the enzyme in this species is believed to be ubiquinone. Couples the redox reaction to proton translocation (for every two electrons transferred, four hydrogen ions are translocated across the cytoplasmic membrane), and thus conserves the redox energy in a proton gradient. The chain is NADH-quinone oxidoreductase subunit B 2 from Rhodopseudomonas palustris (strain BisA53).